The following is a 309-amino-acid chain: MAKTYIFGHKNPDTDAISSAIIMAEFEQLRGNSGAKAYRLGDVSAETQFALDTFNVPAPELLTDDLDGQDVILVDHNEFQQSSDTIASATIKHVIDHHRIANFETAGPLCYRAEPVGCTATILYKMFRERGFEIKPEIAGLMLSAIISDSLLFKSPTCTQQDVKAAEELKDIAKVDIQKYGLDMLKAGASTTDKSVEFLLNMDAKSFTMGDYVTRIAQVNAVDLDEVLNRKEDLEKEMLAVSAQEKYDLFVLVVTDIINSDSKILVVGAEKDKVGEAFNVQLEDDMAFLSGVVSRKKQIVPQITEALTK.

Mn(2+) contacts are provided by H9, D13, D15, D75, H97, and D149.

This sequence belongs to the PPase class C family. Mn(2+) serves as cofactor.

It is found in the cytoplasm. It carries out the reaction diphosphate + H2O = 2 phosphate + H(+). The polypeptide is Probable manganese-dependent inorganic pyrophosphatase (Staphylococcus aureus (strain COL)).